Consider the following 332-residue polypeptide: Adenosine deaminase (332 aa).

Positions 12 and 14 each coordinate Zn(2+). Residues His14, Asp16, and Gly170 each contribute to the substrate site. A Zn(2+)-binding site is contributed by His197. Glu200 functions as the Proton donor in the catalytic mechanism. Asp278 contributes to the Zn(2+) binding site.

The protein belongs to the metallo-dependent hydrolases superfamily. Adenosine and AMP deaminases family. Adenosine deaminase subfamily. Zn(2+) serves as cofactor.

The enzyme catalyses adenosine + H2O + H(+) = inosine + NH4(+). It catalyses the reaction 2'-deoxyadenosine + H2O + H(+) = 2'-deoxyinosine + NH4(+). Catalyzes the hydrolytic deamination of adenosine and 2-deoxyadenosine. The sequence is that of Adenosine deaminase from Clostridium perfringens (strain ATCC 13124 / DSM 756 / JCM 1290 / NCIMB 6125 / NCTC 8237 / Type A).